The following is a 263-amino-acid chain: Small ribosomal subunit protein eS4, Y isoform 1 (263 aa).

One can recognise an S4 RNA-binding domain in the interval Leu-42 to Asp-104.

It belongs to the eukaryotic ribosomal protein eS4 family.

This chain is Small ribosomal subunit protein eS4, Y isoform 1 (RPS4Y1), found in Homo sapiens (Human).